Here is a 145-residue protein sequence, read N- to C-terminus: Transcription antitermination protein NusB (145 aa).

The protein belongs to the NusB family.

Its function is as follows. Involved in transcription antitermination. Required for transcription of ribosomal RNA (rRNA) genes. Binds specifically to the boxA antiterminator sequence of the ribosomal RNA (rrn) operons. The sequence is that of Transcription antitermination protein NusB from Burkholderia mallei (strain NCTC 10247).